The following is a 353-amino-acid chain: Paraneoplastic antigen Ma1 (353 aa).

This sequence belongs to the PNMA family. Testis- and brain-specific. In some cancer patients, specifically expressed by paraneoplastic tumor cells.

It localises to the nucleus. Its subcellular location is the nucleolus. This Homo sapiens (Human) protein is Paraneoplastic antigen Ma1 (PNMA1).